The following is a 244-amino-acid chain: uncharacterized protein (244 aa).

The next 4 helical transmembrane spans lie at 20–42 (TITA…VVLI), 49–67 (FVYI…ATKV), 82–101 (TPSI…ASVF), and 108–125 (AFLV…ATPI).

It is found in the cell membrane. This is an uncharacterized protein from Archaeoglobus fulgidus (strain ATCC 49558 / DSM 4304 / JCM 9628 / NBRC 100126 / VC-16).